The following is a 275-amino-acid chain: Acetyl-coenzyme A carboxylase carboxyl transferase subunit beta (275 aa).

The region spanning 21–275 is the CoA carboxyltransferase N-terminal domain; it reads GLWIKCQCGA…IKIIGMHQAG (255 aa). Zn(2+) contacts are provided by C26, C28, C44, and C47. The C4-type zinc-finger motif lies at 26-47; that stretch reads CQCGAILFAKDLERNLKVCQKC.

Belongs to the AccD/PCCB family. As to quaternary structure, acetyl-CoA carboxylase is a heterohexamer composed of biotin carboxyl carrier protein (AccB), biotin carboxylase (AccC) and two subunits each of ACCase subunit alpha (AccA) and ACCase subunit beta (AccD). Zn(2+) is required as a cofactor.

It is found in the cytoplasm. The catalysed reaction is N(6)-carboxybiotinyl-L-lysyl-[protein] + acetyl-CoA = N(6)-biotinyl-L-lysyl-[protein] + malonyl-CoA. Its pathway is lipid metabolism; malonyl-CoA biosynthesis; malonyl-CoA from acetyl-CoA: step 1/1. In terms of biological role, component of the acetyl coenzyme A carboxylase (ACC) complex. Biotin carboxylase (BC) catalyzes the carboxylation of biotin on its carrier protein (BCCP) and then the CO(2) group is transferred by the transcarboxylase to acetyl-CoA to form malonyl-CoA. In Desulforudis audaxviator (strain MP104C), this protein is Acetyl-coenzyme A carboxylase carboxyl transferase subunit beta.